The primary structure comprises 315 residues: MNFYKKKPVVIFLMGPTACGKSQLAICLRKYLSIELISVDSALIYRGMDIGTDKPSFSDLYNHPHRLLNIKDPVENYSAAEFQKDVLREIDEIIKLGKIPCLVGGSMFYYNVLLHGLSILPPSNIKLREYLIQKSYEKNYLYKKLKLIDPISASRIHKNDFQRLIRALEIFYLSGKSLTELKKKNNYKLPYNIFQFAIIPPNKEWLNNKIELRIKKMLMLGFQKEVEILFLRGDLHKNLPSIRCIGYRQMWEYLEYKNSYKDMFNKIIHATRKLAKHQLTWLKNWKNINKIEYHSTSTILAKKVLDVLEKNDFSV.

Residue 15–22 (GPTACGKS) coordinates ATP. Residue 17-22 (TACGKS) participates in substrate binding. 2 interaction with substrate tRNA regions span residues 40–43 (DSAL) and 162–166 (QRLIR).

Belongs to the IPP transferase family. As to quaternary structure, monomer. Mg(2+) is required as a cofactor.

The catalysed reaction is adenosine(37) in tRNA + dimethylallyl diphosphate = N(6)-dimethylallyladenosine(37) in tRNA + diphosphate. Functionally, catalyzes the transfer of a dimethylallyl group onto the adenine at position 37 in tRNAs that read codons beginning with uridine, leading to the formation of N6-(dimethylallyl)adenosine (i(6)A). This chain is tRNA dimethylallyltransferase, found in Buchnera aphidicola subsp. Acyrthosiphon pisum (strain APS) (Acyrthosiphon pisum symbiotic bacterium).